The primary structure comprises 101 residues: uncharacterized protein (101 aa).

A signal peptide spans 1-19; sequence MKFKYLSTPLLFSALLFSA. The N-palmitoyl cysteine moiety is linked to residue cysteine 20. Residue cysteine 20 is the site of S-diacylglycerol cysteine attachment.

The protein belongs to the MG439/MG440 family.

Its subcellular location is the cell membrane. This is an uncharacterized protein from Mycoplasma pneumoniae (strain ATCC 29342 / M129 / Subtype 1) (Mycoplasmoides pneumoniae).